The sequence spans 234 residues: Uridylate kinase (234 aa).

9–10 (GS) contributes to the ATP binding site. UMP is bound at residue glycine 43. ATP is bound by residues glycine 44 and arginine 48. UMP is bound by residues aspartate 65 and 113–119 (VIPGQTT). 3 residues coordinate ATP: threonine 139, tyrosine 145, and aspartate 148.

Belongs to the UMP kinase family. Homohexamer.

The protein localises to the cytoplasm. It catalyses the reaction UMP + ATP = UDP + ADP. The protein operates within pyrimidine metabolism; CTP biosynthesis via de novo pathway; UDP from UMP (UMPK route): step 1/1. Inhibited by UTP. Functionally, catalyzes the reversible phosphorylation of UMP to UDP. The polypeptide is Uridylate kinase (Methanococcoides burtonii (strain DSM 6242 / NBRC 107633 / OCM 468 / ACE-M)).